Reading from the N-terminus, the 426-residue chain is Glutamate-1-semialdehyde 2,1-aminomutase (426 aa).

An N6-(pyridoxal phosphate)lysine modification is found at lysine 265.

Belongs to the class-III pyridoxal-phosphate-dependent aminotransferase family. HemL subfamily. Homodimer. Pyridoxal 5'-phosphate is required as a cofactor.

It localises to the cytoplasm. The catalysed reaction is (S)-4-amino-5-oxopentanoate = 5-aminolevulinate. It participates in porphyrin-containing compound metabolism; protoporphyrin-IX biosynthesis; 5-aminolevulinate from L-glutamyl-tRNA(Glu): step 2/2. This chain is Glutamate-1-semialdehyde 2,1-aminomutase, found in Salmonella typhi.